A 449-amino-acid polypeptide reads, in one-letter code: Deoxyguanosinetriphosphate triphosphohydrolase-like protein (449 aa).

A disordered region spans residues 1 to 27; it reads MTSSVWQERRHGEDKQRRNDHRSPYQR. A compositionally biased stretch (basic and acidic residues) spans 7–27; the sequence is QERRHGEDKQRRNDHRSPYQR. The HD domain maps to 59 to 255; the sequence is RLTHSLEVSQ…MELADDIAYA (197 aa).

The protein belongs to the dGTPase family. Type 2 subfamily.

This Shewanella baltica (strain OS223) protein is Deoxyguanosinetriphosphate triphosphohydrolase-like protein.